A 105-amino-acid chain; its full sequence is Phosphoribosyl-ATP pyrophosphatase (105 aa).

Belongs to the PRA-PH family.

The protein localises to the cytoplasm. It catalyses the reaction 1-(5-phospho-beta-D-ribosyl)-ATP + H2O = 1-(5-phospho-beta-D-ribosyl)-5'-AMP + diphosphate + H(+). The protein operates within amino-acid biosynthesis; L-histidine biosynthesis; L-histidine from 5-phospho-alpha-D-ribose 1-diphosphate: step 2/9. In Ruegeria sp. (strain TM1040) (Silicibacter sp.), this protein is Phosphoribosyl-ATP pyrophosphatase.